The chain runs to 323 residues: Ankyrin repeat and SOCS box protein 11 (323 aa).

6 ANK repeats span residues 64 to 93 (ADRSPLHEAAAQGRLLALKTLIAQGVNVNL), 97 to 126 (NRVSSLHEACLGGHVACAKALLENGAHVNG), 130 to 159 (HGATPLFNACCSGSAACVNVLLEFGAKAQL), 162 to 191 (HLASPIHEAVKRGHRECMEILLANNVNIDH), 195 to 224 (QLGTPLYVACTYQRVDCVKKLLELGASVDH), and 227 to 256 (WLDTPLHAAARQSNVEVIHLLTDYGANLKR). An SOCS box domain is found at 273 to 323 (SVEQALLLREGPPALSQLCRLCVRKCLGRACHQAIHKLHLPEPLERFLLYQ).

It belongs to the ankyrin SOCS box (ASB) family. In terms of assembly, substrate-recognition component of the ECS(ASB11) complex, composed of ASB11, CUL5, ELOB, ELOC and RNF7/RBX2.

It localises to the endoplasmic reticulum. It participates in protein modification; protein ubiquitination. Functionally, substrate-recognition component of a cullin-5-RING E3 ubiquitin-protein ligase complex (ECS complex, also named CRL5 complex), which mediates the ubiquitination and subsequent proteasomal degradation of target proteins, such as BIK, DIRAS2 and RPN1. The ECS(ASB11) complex acts as a regulator of the endoplasmic reticulum unfolded protein response by mediating ubiquitination and degradation of BIK. The polypeptide is Ankyrin repeat and SOCS box protein 11 (Homo sapiens (Human)).